Consider the following 196-residue polypeptide: Cytochrome c biogenesis ATP-binding export protein CcmA (196 aa).

Residues 2 to 195 (LSFHQLKFNI…HIKSAQILQL (194 aa)) form the ABC transporter domain. 34 to 41 (GANGCGKT) contributes to the ATP binding site.

The protein belongs to the ABC transporter superfamily. CcmA exporter (TC 3.A.1.107) family. As to quaternary structure, the complex is composed of two ATP-binding proteins (CcmA) and two transmembrane proteins (CcmB).

The protein localises to the cell inner membrane. It catalyses the reaction heme b(in) + ATP + H2O = heme b(out) + ADP + phosphate + H(+). Its function is as follows. Part of the ABC transporter complex CcmAB involved in the biogenesis of c-type cytochromes; once thought to export heme, this seems not to be the case, but its exact role is uncertain. Responsible for energy coupling to the transport system. This is Cytochrome c biogenesis ATP-binding export protein CcmA from Rickettsia bellii (strain RML369-C).